We begin with the raw amino-acid sequence, 249 residues long: MNKKESILREFALLCYFFIVYLLLPKNAKHPLADKSFLDPHPVARVSPFGSRPPFLLMVPSTSVPNASLESGQSSTISPRRQKESSIPVLQASGSVSANKTFQSTESSALHQPKSSSSERTGKIITRQRPHSGPTSPRVTPGELLPTLEALKLQEALDFAQLKLKTRQVRYTINLRSQKLLDTICELNDEKRAEVEEQAAYIFTLQKELVETGYEKVSSYNFTYSRLKQKAEELKYASKKEVAQLVNSL.

2 stretches are compositionally biased toward polar residues: residues 66–79 (NASLESGQSSTISP) and 92–119 (ASGSVSANKTFQSTESSALHQPKSSSSE). The interval 66 to 142 (NASLESGQSS…GPTSPRVTPG (77 aa)) is disordered.

The protein resides in the plastid. It is found in the chloroplast. This is an uncharacterized protein from Chlorella vulgaris (Green alga).